Reading from the N-terminus, the 513-residue chain is uncharacterized protein (513 aa).

Over residues 1-16 the composition is skewed to basic and acidic residues; that stretch reads MPREHDSKYHRERDMR. Residues 1 to 21 form a disordered region; that stretch reads MPREHDSKYHRERDMRSGLQE.

This is an uncharacterized protein from Sinorhizobium fredii (strain NBRC 101917 / NGR234).